A 690-amino-acid polypeptide reads, in one-letter code: uncharacterized protein (690 aa).

The interval 553-601 (DESELLENEDKSESLENEDKSESLENEDKSESLENEDKSESLENEKKEK) is disordered. Positions 560-601 (NEDKSESLENEDKSESLENEDKSESLENEDKSESLENEKKEK) are enriched in basic and acidic residues.

The protein belongs to the glycosyltransferase 2 family.

This is an uncharacterized protein from Rickettsia bellii (strain RML369-C).